The sequence spans 358 residues: Methylthioribose-1-phosphate isomerase (358 aa).

Substrate contacts are provided by residues R54 to A56, R96, and Q205. D246 serves as the catalytic Proton donor. A256–K257 is a substrate binding site.

Belongs to the eIF-2B alpha/beta/delta subunits family. MtnA subfamily.

It carries out the reaction 5-(methylsulfanyl)-alpha-D-ribose 1-phosphate = 5-(methylsulfanyl)-D-ribulose 1-phosphate. It participates in amino-acid biosynthesis; L-methionine biosynthesis via salvage pathway; L-methionine from S-methyl-5-thio-alpha-D-ribose 1-phosphate: step 1/6. Its function is as follows. Catalyzes the interconversion of methylthioribose-1-phosphate (MTR-1-P) into methylthioribulose-1-phosphate (MTRu-1-P). The polypeptide is Methylthioribose-1-phosphate isomerase (Pseudomonas entomophila (strain L48)).